Here is a 72-residue protein sequence, read N- to C-terminus: Translation initiation factor IF-1 (72 aa).

Residues 1–72 (MAKEDSIEMQ…SKGRIVFRSR (72 aa)) enclose the S1-like domain.

This sequence belongs to the IF-1 family. Component of the 30S ribosomal translation pre-initiation complex which assembles on the 30S ribosome in the order IF-2 and IF-3, IF-1 and N-formylmethionyl-tRNA(fMet); mRNA recruitment can occur at any time during PIC assembly.

The protein localises to the cytoplasm. In terms of biological role, one of the essential components for the initiation of protein synthesis. Stabilizes the binding of IF-2 and IF-3 on the 30S subunit to which N-formylmethionyl-tRNA(fMet) subsequently binds. Helps modulate mRNA selection, yielding the 30S pre-initiation complex (PIC). Upon addition of the 50S ribosomal subunit IF-1, IF-2 and IF-3 are released leaving the mature 70S translation initiation complex. In Aeromonas hydrophila subsp. hydrophila (strain ATCC 7966 / DSM 30187 / BCRC 13018 / CCUG 14551 / JCM 1027 / KCTC 2358 / NCIMB 9240 / NCTC 8049), this protein is Translation initiation factor IF-1.